Here is a 336-residue protein sequence, read N- to C-terminus: Ornithine carbamoyltransferase, catabolic (336 aa).

Residues 62 to 65, Q89, R113, and 140 to 143 each bind carbamoyl phosphate; these read STRT and HPTQ. Residues N172, D236, and 240–241 each bind L-ornithine; that span reads SM. Residues 277-278 and R322 contribute to the carbamoyl phosphate site; that span reads CL.

The protein belongs to the aspartate/ornithine carbamoyltransferase superfamily. OTCase family.

The protein localises to the cytoplasm. It catalyses the reaction carbamoyl phosphate + L-ornithine = L-citrulline + phosphate + H(+). It participates in amino-acid degradation; L-arginine degradation via ADI pathway; carbamoyl phosphate from L-arginine: step 2/2. Functionally, reversibly catalyzes the transfer of the carbamoyl group from carbamoyl phosphate (CP) to the N(epsilon) atom of ornithine (ORN) to produce L-citrulline. The sequence is that of Ornithine carbamoyltransferase, catabolic from Staphylococcus aureus (strain MSSA476).